The sequence spans 1079 residues: MPRVHNIKKSLTPHISCVTNESDNLLDFLPDRLRAKLLPFQKDGIIFALKRNGRCMVADEMGLGKTIQAIGITYFYKEEWPLLIVVPSSLRYPWTEEIEKWIPELSPEEINVIQNKTDVRRMSTSKVTVLGYGLLTADAKTLIDALNNQNFKVVIVDESHYMKSRNATRSRILLPIVQKARRAILLTGTPALGRPEELFMQIEALFPQKFGRWTDYAKRYCNAHIRYFGKRPQWDCRGASNLNELHQLLSDIMIRRLKTEVLTQLPPKVRQRIPFDLPSAAAKELNTSFEEWEKIMRTPNSGAMETVMGLITRMFKQTAIAKAGAVKDYIKMMLQNDSLKFLVFAHHLSMLQACTEAVIENKTRYIRIDGSVSSSERIHLVNQFQKDPDTRVAILSIQAAGQGLTFTAASHVVFAELYWDPGHIKQAEDRAHRIGQCSSVNIHYLIANGTLDTLMWGMLNRKAQVTGSTLNGRKEKIQAEEGDKEKWDFLQFAEAWTPNDSSEELRKEALFTHFEKEKQHDIRSFFVPQPKKRQLMTSCDESKRFREENTVVSSDPTKTAARDIIDYESDVEPETKRLKLAASEDHCSPSEETPSQSKQIRTPLVESVQEAKAQLTTPAFPVEGWQCSLCTYINNSELPYCEMCETPQGSAVMQIDSLNHIQDKNEKDDSQKDTSKKVQTISDCEKQALAQSEPGQLADSKEETPKIEKEDGLTSQPGNEQWKSSDTLPVYDTLMFCASRNTDRIHIYTKDGKQMSCNFIPLDIKLDLWEDLPASFQLKQYRSLILRFVREWSSLTAMKQRIIRKSGQLFCSPILALEEITKQQTKQNCTKRYITKEDVAVASMDKVKNVGGHVRLITKESRPRDPFTKKLLEDGACVPFLNPYTVQADLTVKPSTSKGYLQAVDNEGNPLCLRCQQPTCQTKQACKANSWDSRFCSLKCQEEFWIRSNNSYLRAKVFETEHGVCQLCNVNAQELFLRLRDAPKSQRKNLLYATWTSKLPLEQLNEMIRNPGEGHFWQVDHIKPVYGGGGQCSLDNLQTLCTVCHKERTARQAKERSQVRRQSLASKHGSDITRFLVKK.

The region spanning 46–208 (IFALKRNGRC…FMQIEALFPQ (163 aa)) is the Helicase ATP-binding domain. The segment at 46-481 (IFALKRNGRC…GRKEKIQAEE (436 aa)) is DNA annealing helicase activity. 59–66 (DEMGLGKT) serves as a coordination point for ATP. A DEAH box motif is present at residues 157–160 (DESH). The 157-residue stretch at 325-481 (AVKDYIKMML…GRKEKIQAEE (157 aa)) folds into the Helicase C-terminal domain. Positions 519 to 526 (QHDIRSFF) match the PIP-box motif. Phosphoserine is present on Ser569. The interval 582-601 (ASEDHCSPSEETPSQSKQIR) is disordered. Residues 590–600 (SEETPSQSKQI) are compositionally biased toward polar residues. A RanBP2-type zinc finger spans residues 621 to 650 (PVEGWQCSLCTYINNSELPYCEMCETPQGS). Residue Cys630 is modified to (Microbial infection) S-methylcysteine. Residues 689–725 (LAQSEPGQLADSKEETPKIEKEDGLTSQPGNEQWKSS) form a disordered region. Over residues 699-712 (DSKEETPKIEKEDG) the composition is skewed to basic and acidic residues. Residues 713 to 725 (LTSQPGNEQWKSS) show a composition bias toward polar residues. Residues 1011–1051 (PGEGHFWQVDHIKPVYGGGGQCSLDNLQTLCTVCHKERTAR) enclose the HNH domain. The segment at 1011-1079 (PGEGHFWQVD…SDITRFLVKK (69 aa)) is endonuclease activity. Residues 1074–1078 (RFLVK) carry the APIM motif motif.

Belongs to the SNF2/RAD54 helicase family. In terms of assembly, interacts (via PIP-box and RanBP2-type zinc finger) with PCNA (when PCNA is polyubiquitinated via 'Lys-63'-linked polyubiquitin). Post-translationally, (Microbial infection) Methylation at Cys-630 by enteropathogenic E.coli protein NleE or S.flexneri protein OspZ: methylation disrupts ability to bind 'Lys-63'-linked ubiquitin.

Its subcellular location is the nucleus. It localises to the chromosome. Its function is as follows. DNA annealing helicase and endonuclease required to maintain genome stability at stalled or collapsed replication forks by facilitating fork restart and limiting inappropriate recombination that could occur during template switching events. Recruited to the sites of stalled DNA replication by polyubiquitinated PCNA and acts as a structure-specific endonuclease that cleaves the replication fork D-loop intermediate, generating an accessible 3'-OH group in the template of the leading strand, which is amenable to extension by DNA polymerase. In addition to endonuclease activity, also catalyzes the fork regression via annealing helicase activity in order to prevent disintegration of the replication fork and the formation of double-strand breaks. In Homo sapiens (Human), this protein is DNA annealing helicase and endonuclease ZRANB3.